The sequence spans 463 residues: Elongation factor 1-alpha 1 (463 aa).

Residues 5–242 (KIHINIVVIG…DAILPPARPT (238 aa)) enclose the tr-type G domain. The interval 14-21 (GHVDSGKS) is G1. A GTP-binding site is contributed by 14-21 (GHVDSGKS). A G2 region spans residues 70–74 (GITID). The segment at 91-94 (DAPG) is G3. Residues 91-95 (DAPGH) and 153-156 (NKMD) contribute to the GTP site. The tract at residues 153 to 156 (NKMD) is G4. The interval 194–196 (SGW) is G5. Residues Glu-301 and Glu-374 each carry the 5-glutamyl glycerylphosphorylethanolamine modification.

The protein belongs to the TRAFAC class translation factor GTPase superfamily. Classic translation factor GTPase family. EF-Tu/EF-1A subfamily.

It is found in the cytoplasm. In terms of biological role, this protein promotes the GTP-dependent binding of aminoacyl-tRNA to the A-site of ribosomes during protein biosynthesis. The sequence is that of Elongation factor 1-alpha 1 from Drosophila melanogaster (Fruit fly).